The primary structure comprises 490 residues: Glutamyl-tRNA(Gln) amidotransferase subunit A (490 aa).

Residues Lys78 and Ser158 each act as charge relay system in the active site. The disordered stretch occupies residues 131 to 159; that stretch reads SNETSRFGPPINPWRRKGDNAGLTPGGSS. The active-site Acyl-ester intermediate is Ser182.

It belongs to the amidase family. GatA subfamily. Heterotrimer of A, B and C subunits.

The catalysed reaction is L-glutamyl-tRNA(Gln) + L-glutamine + ATP + H2O = L-glutaminyl-tRNA(Gln) + L-glutamate + ADP + phosphate + H(+). Its function is as follows. Allows the formation of correctly charged Gln-tRNA(Gln) through the transamidation of misacylated Glu-tRNA(Gln) in organisms which lack glutaminyl-tRNA synthetase. The reaction takes place in the presence of glutamine and ATP through an activated gamma-phospho-Glu-tRNA(Gln). The chain is Glutamyl-tRNA(Gln) amidotransferase subunit A from Hyphomonas neptunium (strain ATCC 15444).